The primary structure comprises 671 residues: DNA ligase (671 aa).

Residues 32-36, 81-82, and glutamate 113 contribute to the NAD(+) site; these read DAEYD and SL. Residue lysine 115 is the N6-AMP-lysine intermediate of the active site. 4 residues coordinate NAD(+): arginine 136, glutamate 173, lysine 290, and lysine 314. Cysteine 408, cysteine 411, cysteine 426, and cysteine 432 together coordinate Zn(2+). One can recognise a BRCT domain in the interval 593 to 671; the sequence is EIDSPFAGKT…EAEMLRLLGV (79 aa).

It belongs to the NAD-dependent DNA ligase family. LigA subfamily. Requires Mg(2+) as cofactor. Mn(2+) is required as a cofactor.

It carries out the reaction NAD(+) + (deoxyribonucleotide)n-3'-hydroxyl + 5'-phospho-(deoxyribonucleotide)m = (deoxyribonucleotide)n+m + AMP + beta-nicotinamide D-nucleotide.. DNA ligase that catalyzes the formation of phosphodiester linkages between 5'-phosphoryl and 3'-hydroxyl groups in double-stranded DNA using NAD as a coenzyme and as the energy source for the reaction. It is essential for DNA replication and repair of damaged DNA. The protein is DNA ligase of Salmonella arizonae (strain ATCC BAA-731 / CDC346-86 / RSK2980).